Here is a 396-residue protein sequence, read N- to C-terminus: Tryptophan synthase beta chain (396 aa).

The residue at position 86 (lysine 86) is an N6-(pyridoxal phosphate)lysine.

The protein belongs to the TrpB family. Tetramer of two alpha and two beta chains. Pyridoxal 5'-phosphate is required as a cofactor.

The enzyme catalyses (1S,2R)-1-C-(indol-3-yl)glycerol 3-phosphate + L-serine = D-glyceraldehyde 3-phosphate + L-tryptophan + H2O. Its pathway is amino-acid biosynthesis; L-tryptophan biosynthesis; L-tryptophan from chorismate: step 5/5. In terms of biological role, the beta subunit is responsible for the synthesis of L-tryptophan from indole and L-serine. This chain is Tryptophan synthase beta chain, found in Francisella tularensis subsp. novicida (strain U112).